Reading from the N-terminus, the 311-residue chain is Malate dehydrogenase (311 aa).

NAD(+)-binding positions include 7 to 13 (GAAGGIG) and D34. Residues R81 and R87 each coordinate substrate. NAD(+) is bound by residues N94 and 117-119 (ITN). Substrate-binding residues include N119 and R153. The active-site Proton acceptor is H177. M227 provides a ligand contact to NAD(+).

It belongs to the LDH/MDH superfamily. MDH type 1 family. Homodimer.

It catalyses the reaction (S)-malate + NAD(+) = oxaloacetate + NADH + H(+). Functionally, catalyzes the reversible oxidation of malate to oxaloacetate. The chain is Malate dehydrogenase from Aeromonas hydrophila subsp. hydrophila (strain ATCC 7966 / DSM 30187 / BCRC 13018 / CCUG 14551 / JCM 1027 / KCTC 2358 / NCIMB 9240 / NCTC 8049).